The following is a 367-amino-acid chain: Glutamate 5-kinase (367 aa).

Lysine 10 contacts ATP. Positions 50, 137, and 149 each coordinate substrate. Residues 169–170 and 211–217 each bind ATP; these read TD and TGGMGTK. The region spanning 275–353 is the PUA domain; it reads AGEITVDEGA…QQIDAILGYE (79 aa).

This sequence belongs to the glutamate 5-kinase family.

Its subcellular location is the cytoplasm. It carries out the reaction L-glutamate + ATP = L-glutamyl 5-phosphate + ADP. Its pathway is amino-acid biosynthesis; L-proline biosynthesis; L-glutamate 5-semialdehyde from L-glutamate: step 1/2. Functionally, catalyzes the transfer of a phosphate group to glutamate to form L-glutamate 5-phosphate. This is Glutamate 5-kinase from Cronobacter sakazakii (strain ATCC BAA-894) (Enterobacter sakazakii).